Consider the following 140-residue polypeptide: Ribosomal RNA large subunit methyltransferase H (140 aa).

2 residues coordinate S-adenosyl-L-methionine: L55 and G87.

The protein belongs to the RNA methyltransferase RlmH family. In terms of assembly, homodimer.

The protein localises to the cytoplasm. The enzyme catalyses pseudouridine(1915) in 23S rRNA + S-adenosyl-L-methionine = N(3)-methylpseudouridine(1915) in 23S rRNA + S-adenosyl-L-homocysteine + H(+). Functionally, specifically methylates the pseudouridine at position 1915 (m3Psi1915) in 23S rRNA. This chain is Ribosomal RNA large subunit methyltransferase H, found in Rhizorhabdus wittichii (strain DSM 6014 / CCUG 31198 / JCM 15750 / NBRC 105917 / EY 4224 / RW1) (Sphingomonas wittichii).